Here is a 222-residue protein sequence, read N- to C-terminus: Sugar fermentation stimulation protein homolog (222 aa).

The protein belongs to the SfsA family.

In Thermotoga maritima (strain ATCC 43589 / DSM 3109 / JCM 10099 / NBRC 100826 / MSB8), this protein is Sugar fermentation stimulation protein homolog.